Consider the following 220-residue polypeptide: MFLRKYPGQLGRQHMNDQESVIYIVDDDNAVLEALSSLVRSIGLRVKCFSSATAFLNDVGQLACGCLILDVRMPEMSGLDVQRKLAELGEQIPIIFISGHGDIPMAVKAIKAGAIDFFTKPFREEDLLGAIRTALKLAPQQKENAPQISELKASYESLSKREQQVLKFVLQGFLNKQTALELDISEATVKVHRHNIMKKMKVSSVQDLVRVTERLKDSLK.

The region spanning 21-135 (VIYIVDDDNA…DLLGAIRTAL (115 aa)) is the Response regulatory domain. Aspartate 70 carries the post-translational modification 4-aspartylphosphate. The HTH luxR-type domain occupies 151 to 216 (LKASYESLSK…DLVRVTERLK (66 aa)). The segment at residues 175–194 (NKQTALELDISEATVKVHRH) is a DNA-binding region (H-T-H motif).

In terms of processing, phosphorylated by TmoS.

Its subcellular location is the cytoplasm. In terms of biological role, member of the two-component regulatory system TmoS/TmoT involved in the regulation of toluene degradation. Induces expression of tmoX operon. The protein is Response regulator protein TmoT (tmoT) of Ectopseudomonas mendocina (Pseudomonas mendocina).